Reading from the N-terminus, the 139-residue chain is Ribosomal RNA large subunit methyltransferase H (139 aa).

Residues L56, G88, and 107–112 (LSLMTF) each bind S-adenosyl-L-methionine.

It belongs to the RNA methyltransferase RlmH family. In terms of assembly, homodimer.

Its subcellular location is the cytoplasm. The catalysed reaction is pseudouridine(1915) in 23S rRNA + S-adenosyl-L-methionine = N(3)-methylpseudouridine(1915) in 23S rRNA + S-adenosyl-L-homocysteine + H(+). In terms of biological role, specifically methylates the pseudouridine at position 1915 (m3Psi1915) in 23S rRNA. This Coprothermobacter proteolyticus (strain ATCC 35245 / DSM 5265 / OCM 4 / BT) protein is Ribosomal RNA large subunit methyltransferase H.